The chain runs to 90 residues: DNA-directed RNA polymerase subunit omega (90 aa).

The protein belongs to the RNA polymerase subunit omega family. The RNAP catalytic core consists of 2 alpha, 1 beta, 1 beta' and 1 omega subunit. When a sigma factor is associated with the core the holoenzyme is formed, which can initiate transcription.

The catalysed reaction is RNA(n) + a ribonucleoside 5'-triphosphate = RNA(n+1) + diphosphate. In terms of biological role, promotes RNA polymerase assembly. Latches the N- and C-terminal regions of the beta' subunit thereby facilitating its interaction with the beta and alpha subunits. The protein is DNA-directed RNA polymerase subunit omega of Rhodopirellula baltica (strain DSM 10527 / NCIMB 13988 / SH1).